Reading from the N-terminus, the 328-residue chain is Lipoyl synthase (328 aa).

C56, C61, C67, C82, C86, C89, and S298 together coordinate [4Fe-4S] cluster. The 220-residue stretch at W68–S287 folds into the Radical SAM core domain.

This sequence belongs to the radical SAM superfamily. Lipoyl synthase family. It depends on [4Fe-4S] cluster as a cofactor.

It localises to the cytoplasm. The catalysed reaction is [[Fe-S] cluster scaffold protein carrying a second [4Fe-4S](2+) cluster] + N(6)-octanoyl-L-lysyl-[protein] + 2 oxidized [2Fe-2S]-[ferredoxin] + 2 S-adenosyl-L-methionine + 4 H(+) = [[Fe-S] cluster scaffold protein] + N(6)-[(R)-dihydrolipoyl]-L-lysyl-[protein] + 4 Fe(3+) + 2 hydrogen sulfide + 2 5'-deoxyadenosine + 2 L-methionine + 2 reduced [2Fe-2S]-[ferredoxin]. It functions in the pathway protein modification; protein lipoylation via endogenous pathway; protein N(6)-(lipoyl)lysine from octanoyl-[acyl-carrier-protein]: step 2/2. Its function is as follows. Catalyzes the radical-mediated insertion of two sulfur atoms into the C-6 and C-8 positions of the octanoyl moiety bound to the lipoyl domains of lipoate-dependent enzymes, thereby converting the octanoylated domains into lipoylated derivatives. This chain is Lipoyl synthase, found in Streptomyces avermitilis (strain ATCC 31267 / DSM 46492 / JCM 5070 / NBRC 14893 / NCIMB 12804 / NRRL 8165 / MA-4680).